The chain runs to 549 residues: Copalyl diphosphate synthase (549 aa).

Positions 321–326 (DADDTA) match the DXDDTA motif motif. Positions 451–457 (QRDDGSW) match the QXXDGSW motif motif.

This sequence belongs to the terpene synthase family. It depends on Mg(2+) as a cofactor.

It carries out the reaction (2E,6E,10E)-geranylgeranyl diphosphate = (+)-copalyl diphosphate. In terms of biological role, involved in the biosynthesis of the labdane-type bicyclic diterpene labda-8(17),12(E),14-triene. Catalyzes the conversion of geranylgeranyl diphosphate (GGDP) into (+)-copalyl diphosphate. This is Copalyl diphosphate synthase from Streptomyces anulatus (Streptomyces chrysomallus).